The sequence spans 152 residues: MFKEFKEFALKGNVVDMAVGIILGVAFGAIVKSLVDDLLMPGIGILLGSADFSNLFLVIKEGATPGPFTTLADAQKAGAVTINYGLFINTIVNFIIVAFALFLVIRNINQLRRMTEKPPVEEAPTTKDCPYCLSAIPLKATRCPNCTSELKG.

3 helical membrane passes run 14 to 34, 39 to 59, and 85 to 105; these read VVDM…VKSL, LMPG…FLVI, and GLFI…FLVI.

It belongs to the MscL family. In terms of assembly, homopentamer.

It is found in the cell inner membrane. Its function is as follows. Channel that opens in response to stretch forces in the membrane lipid bilayer. May participate in the regulation of osmotic pressure changes within the cell. This chain is Large-conductance mechanosensitive channel, found in Syntrophus aciditrophicus (strain SB).